The following is a 404-amino-acid chain: Multidrug resistance protein MdtG (404 aa).

The next 11 helical transmembrane spans lie at 19-39 (LGCF…PLYV), 56-76 (LVFS…GGLA), 90-110 (LGMA…QFLI), 113-133 (ALLG…ATQV), 144-164 (TLST…GLLA), 171-191 (PVFF…FFFI), 222-242 (LFVT…ILTL), 254-274 (IAFI…LSAP), 288-308 (ILIV…FVQT), 317-337 (FLLG…LVYN), and 376-396 (AVFC…WNSL).

Belongs to the major facilitator superfamily. DHA1 family. MdtG (TC 2.A.1.2.20) subfamily.

Its subcellular location is the cell inner membrane. This is Multidrug resistance protein MdtG from Salmonella agona (strain SL483).